A 387-amino-acid chain; its full sequence is MNVLLLLVLCTLAMGCGATSPPQPAARPSSLLSLDCNSSYVLDIANDILQDINRDRKDGYVLSLNRVSDAREHRQEAGLGSLFYFTLDVLETGCHVLSRTSWKNCEVRIFHESVYGQCKAIFYINKEKRIFYLPAYNCTLRPVSQSAIIMTCPDCPSTSPYDLSNPRFMETATESLAKYNSESPSKQYSLVKITKTSSQWVFGPAYFVEYLIKESPCVKSEGSSCALESPGSVPVGICHGSLGEPQGNQGKIISVTCSFFNSQAPTPRGENATVNQRPANPSKTEELQQQNTAPTNSPTKAVPKGSVQYLPDWDKKREGSQEKDPVETFPVQLDLTTNPQGESLDVSFLFQEPMEEKVVVLPFPSKEQRSAECPGPAQKGYPFILPS.

The N-terminal stretch at 1–18 (MNVLLLLVLCTLAMGCGA) is a signal peptide. Cystatin fetuin-B-type domains lie at 25 to 139 (AARP…YNCT) and 150 to 258 (MTCP…VTCS). Residue asparagine 37 is glycosylated (N-linked (GlcNAc...) asparagine). 5 cysteine pairs are disulfide-bonded: cysteine 94-cysteine 105, cysteine 118-cysteine 138, cysteine 152-cysteine 155, cysteine 217-cysteine 225, and cysteine 238-cysteine 257. An N-linked (GlcNAc...) asparagine glycan is attached at asparagine 137. The interval 264–306 (APTPRGENATVNQRPANPSKTEELQQQNTAPTNSPTKAVPKGS) is disordered. N-linked (GlcNAc...) asparagine glycosylation occurs at asparagine 271. Over residues 272–299 (ATVNQRPANPSKTEELQQQNTAPTNSPT) the composition is skewed to polar residues. O-linked (GalNAc...) threonine glycans are attached at residues threonine 292 and threonine 295. Serine 320 is subject to Phosphoserine. The segment at 366–387 (KEQRSAECPGPAQKGYPFILPS) is disordered.

This sequence belongs to the fetuin family. As to expression, liver and testis.

It localises to the secreted. In terms of biological role, protease inhibitor required for egg fertilization. Required to prevent premature zona pellucida hardening before fertilization, probably by inhibiting the protease activity of ASTL, a protease that mediates the cleavage of ZP2 and triggers zona pellucida hardening. The sequence is that of Fetuin-B (FETUB) from Bos taurus (Bovine).